Reading from the N-terminus, the 155-residue chain is Cytochrome c-type biogenesis protein CcmE (155 aa).

Over Met-1–Arg-7 the chain is Cytoplasmic. A helical; Signal-anchor for type II membrane protein transmembrane segment spans residues Leu-8–Ala-28. At Phe-29–Pro-155 the chain is on the periplasmic side. The heme site is built by His-124 and Tyr-128.

The protein belongs to the CcmE/CycJ family.

The protein localises to the cell inner membrane. In terms of biological role, heme chaperone required for the biogenesis of c-type cytochromes. Transiently binds heme delivered by CcmC and transfers the heme to apo-cytochromes in a process facilitated by CcmF and CcmH. This is Cytochrome c-type biogenesis protein CcmE from Rhizobium etli (strain ATCC 51251 / DSM 11541 / JCM 21823 / NBRC 15573 / CFN 42).